The chain runs to 147 residues: Large ribosomal subunit protein uL15 (147 aa).

Residues 1 to 13 (MELHSLKAAEGSR) are compositionally biased toward basic and acidic residues. Positions 1 to 57 (MELHSLKAAEGSRKVRNRVGRGTSSGNGKTSGRGQKGQKSRSGGGVRPGFEGGQTEL) are disordered. 2 stretches are compositionally biased toward gly residues: residues 23–35 (TSSG…GRGQ) and 42–52 (SGGGVRPGFEG).

It belongs to the universal ribosomal protein uL15 family. As to quaternary structure, part of the 50S ribosomal subunit.

Its function is as follows. Binds to the 23S rRNA. The protein is Large ribosomal subunit protein uL15 of Lactococcus lactis subsp. cremoris (strain MG1363).